The sequence spans 362 residues: Probable aromatic amino acid hydroxylase (362 aa).

Residues H200 and H205 each coordinate Fe cation.

This sequence belongs to the biopterin-dependent aromatic amino acid hydroxylase family. The cofactor is Fe(2+).

This chain is Probable aromatic amino acid hydroxylase, found in Chlamydia pneumoniae (Chlamydophila pneumoniae).